The following is a 257-amino-acid chain: Imidazole glycerol phosphate synthase subunit HisF (257 aa).

Catalysis depends on residues Asp-12 and Asp-131.

It belongs to the HisA/HisF family. Heterodimer of HisH and HisF.

The protein localises to the cytoplasm. The catalysed reaction is 5-[(5-phospho-1-deoxy-D-ribulos-1-ylimino)methylamino]-1-(5-phospho-beta-D-ribosyl)imidazole-4-carboxamide + L-glutamine = D-erythro-1-(imidazol-4-yl)glycerol 3-phosphate + 5-amino-1-(5-phospho-beta-D-ribosyl)imidazole-4-carboxamide + L-glutamate + H(+). Its pathway is amino-acid biosynthesis; L-histidine biosynthesis; L-histidine from 5-phospho-alpha-D-ribose 1-diphosphate: step 5/9. IGPS catalyzes the conversion of PRFAR and glutamine to IGP, AICAR and glutamate. The HisF subunit catalyzes the cyclization activity that produces IGP and AICAR from PRFAR using the ammonia provided by the HisH subunit. The sequence is that of Imidazole glycerol phosphate synthase subunit HisF from Burkholderia thailandensis (strain ATCC 700388 / DSM 13276 / CCUG 48851 / CIP 106301 / E264).